The chain runs to 112 residues: Iron-sulfur cluster assembly protein CyaY (112 aa).

This sequence belongs to the frataxin family.

Functionally, involved in iron-sulfur (Fe-S) cluster assembly. May act as a regulator of Fe-S biogenesis. This Janthinobacterium sp. (strain Marseille) (Minibacterium massiliensis) protein is Iron-sulfur cluster assembly protein CyaY.